A 1603-amino-acid polypeptide reads, in one-letter code: Gag-Pol polyprotein (1603 aa).

Residues 124–141 are compositionally biased toward basic and acidic residues; the sequence is KGEEVGETTAQRDAKMAP. The segment at 124–144 is disordered; it reads KGEEVGETTAQRDAKMAPEKM. Residues 172 to 175 carry the PPXY motif motif; that stretch reads PPPY. The LYPX(n)L motif motif lies at 180–184; sequence LYPSL. A Nuclear export signal motif is present at residues 219-229; it reads LTDWARIREEL. 2 consecutive CCHC-type zinc fingers follow at residues 507–524 and 533–550; these read GLCY…QCPK and ERCQ…QCRR. Residues 544–571 are disordered; sequence NAKQCRRRDGNQGQRPGKGLSSGSWPVS. The region spanning 609 to 690 is the Peptidase A2 domain; the sequence is ITALLDSGAD…VRGSILGRDC (82 aa). Asp-614 (for protease activity; shared with dimeric partner) is an active-site residue. The Reverse transcriptase domain maps to 750–938; it reads LQLGHIEPSL…PGVQYLGYKL (189 aa). Residues Asp-815, Asp-890, Asp-891, Asp-1158, Glu-1192, Asp-1213, and Asp-1272 each contribute to the Mg(2+) site. The RNase H type-1 domain occupies 1149-1280; it reads PVPGPTAFTD…ADSQATFQAY (132 aa). The Integrase-type zinc-finger motif lies at 1280–1321; sequence YPLREAKDLHTALHIGPRALSKACNISMQQAREVVQTCPHCN. Residues His-1289, His-1293, Cys-1317, and Cys-1320 each contribute to the Zn(2+) site. In terms of domain architecture, Integrase catalytic spans 1333–1496; it reads RGLGPLQIWQ…TPIQKHWRPT (164 aa). Mg(2+) is bound by residues Asp-1344, Asp-1401, and Glu-1437. Positions 1502–1550 form a DNA-binding region, integrase-type; the sequence is PPVKIRIETGEWEKGWNVLVWGRGYAAVKNRDTDKVIWVPSRKVKPDVT. The segment at 1548–1567 is involved in homooctamerization; sequence DVTQKDEVTKKDEASPLFAG. The segment at 1566–1603 is disordered; the sequence is AGISDWIPWEDEQEGLQGETASNKQERPGEDTLAANES.

As to quaternary structure, active as a homodimer. In terms of assembly, homodimer. Homomultimer. Homohexamer. Homodimer; further associates as a homooctamer. As to quaternary structure, heterodimer of alpha and beta subunits. Three forms of RT exist: alpha-alpha (alpha-Pol), beta-beta (beta-Pol), and alpha-beta, with the major form being the heterodimer. Both the polymerase and RNase H active sites are located in the alpha subunit of heterodimeric RT alpha-beta. Requires Mg(2+) as cofactor. It depends on Mn(2+) as a cofactor. Post-translationally, specific enzymatic cleavages in vivo yield mature proteins. Capsid protein p27: The cleavage at the C-terminus is slowly trimmed by the viral protease, sometimes being cut internally thereby generating the short version of the capsid protein and a capsid protein C-terminally extended by 3 amino acids in a ratio of 2:1.

It localises to the virion. The catalysed reaction is DNA(n) + a 2'-deoxyribonucleoside 5'-triphosphate = DNA(n+1) + diphosphate. The enzyme catalyses Endonucleolytic cleavage to 5'-phosphomonoester.. In terms of biological role, capsid protein p27: Self-associates to form the irregular polyhedron core composed of hexamers and pentamers, that encapsulates the genomic RNA-nucleocapsid complex. Assembles as a tube in vitro. Binds to inositol hexakisphosphate (IP6), which allows the assembly of the polyhedral capsid. Spacer peptide: Plays a role in the oligomerization of the Gag polyprotein and in the stabilization of the immature particle. Essential layering element during tube assembly. Functionally, binds strongly to viral nucleic acids and promotes their packaging. Plays a role in the maturation-stabilization of the viral dimeric RNA via highly structured zinc-binding motifs. Its function is as follows. The aspartyl protease that mediates proteolytic cleavages of Gag and Gag-Pol polyproteins during or shortly after the release of the virion from the plasma membrane. Cleavages take place as an ordered, step-wise cascade to yield mature proteins. This process is called maturation. Displays maximal activity during the budding process just prior to particle release from the cell. In terms of biological role, catalyzes viral DNA integration into the host chromosome, by performing a series of DNA cutting and joining reactions. This recombination event is an essential step in the viral replication cycle. Has a strong preference for using the 3'-OH at the viral DNA end as a nucleophile. In Avian leukosis virus subgroup A (isolate RSA) (ALV-A RSA), this protein is Gag-Pol polyprotein (gag-pol).